Consider the following 626-residue polypeptide: Endoglucanase 19 (626 aa).

Positions 1–23 (MGSRTTISILVVLLLGLVQLAIS) are cleaved as a signal peptide. D79 acts as the Nucleophile in catalysis. Active-site residues include H412, D464, and E473. Positions 515–536 (APVPQRKPTKPPAASSPSPITI) are disordered. The span at 526-536 (PAASSPSPITI) shows a compositional bias: low complexity. 2 N-linked (GlcNAc...) asparagine glycosylation sites follow: N560 and N622.

The protein belongs to the glycosyl hydrolase 9 (cellulase E) family.

The protein resides in the secreted. The catalysed reaction is Endohydrolysis of (1-&gt;4)-beta-D-glucosidic linkages in cellulose, lichenin and cereal beta-D-glucans.. The sequence is that of Endoglucanase 19 from Arabidopsis thaliana (Mouse-ear cress).